The sequence spans 190 residues: uncharacterized protein (190 aa).

The helical transmembrane segment at 1–21 (MLVMSITFSFVAVALLVYFYV) threads the bilayer. A compositionally biased stretch (basic and acidic residues) spans 103-114 (REEVCARPEHRS). A disordered region spans residues 103–130 (REEVCARPEHRSAPSRAGSSAAKPTPTK).

To B.burgdorferi BB0265.

The protein localises to the membrane. This is an uncharacterized protein from Treponema pallidum (strain Nichols).